Reading from the N-terminus, the 159-residue chain is Transcription elongation factor GreA (159 aa).

Belongs to the GreA/GreB family.

Its function is as follows. Necessary for efficient RNA polymerase transcription elongation past template-encoded arresting sites. The arresting sites in DNA have the property of trapping a certain fraction of elongating RNA polymerases that pass through, resulting in locked ternary complexes. Cleavage of the nascent transcript by cleavage factors such as GreA or GreB allows the resumption of elongation from the new 3'terminus. GreA releases sequences of 2 to 3 nucleotides. The polypeptide is Transcription elongation factor GreA (Buchnera aphidicola subsp. Baizongia pistaciae (strain Bp)).